We begin with the raw amino-acid sequence, 800 residues long: Protein gfi-3 (800 aa).

A coiled-coil region spans residues 346–366; that stretch reads ESLQQAQLRNDEICHQMANIE. TPR repeat units follow at residues 526 to 559 and 637 to 670; these read AIGA…YPEE and IRIH…AENT.

As to quaternary structure, the APC/C complex is probably composed of at least 12 subunits: apc-2, apc-10, apc-11, cdc-26, emb-1, emb-27, emb-30, mat-1, mat-2, mat-3, such-1 and gfi-3. As to expression, expressed in gut cells and mature sperm stored in the spermatheca.

The protein operates within protein modification; protein ubiquitination. In terms of biological role, probable component of the anaphase promoting complex/cyclosome (APC/C), a cell cycle-regulated E3 ubiquitin ligase that controls progression through mitosis and the G1 phase of the cell cycle. The APC/C complex acts by mediating ubiquitination and subsequent degradation of target proteins. Required for the metaphase to anaphase transition in meiosis. In Caenorhabditis elegans, this protein is Protein gfi-3.